The sequence spans 239 residues: Proteasome activator complex subunit 2 (239 aa).

An N-acetylalanine modification is found at alanine 2. Serine 10 bears the Phosphoserine mark. The segment at 65–86 is disordered; it reads DIPIPDPPPKDDEMETDKQEKK. The span at 72–86 shows a compositional bias: basic and acidic residues; it reads PPKDDEMETDKQEKK.

The protein belongs to the PA28 family. Heterodimer of PSME1 and PSME2, which forms a hexameric ring.

Its function is as follows. Implicated in immunoproteasome assembly and required for efficient antigen processing. The PA28 activator complex enhances the generation of class I binding peptides by altering the cleavage pattern of the proteasome. The protein is Proteasome activator complex subunit 2 (PSME2) of Bos taurus (Bovine).